The chain runs to 252 residues: Octanoyltransferase (252 aa).

Residues 1 to 21 (MPSAPAAPAAPAAPDAAASVA) show a composition bias toward low complexity. Residues 1–22 (MPSAPAAPAAPAAPDAAASVAP) are disordered. The 182-residue stretch at 56–237 (PDTDDEIWVV…RLIAHLDGAT (182 aa)) folds into the BPL/LPL catalytic domain. Residues 96–103 (RGGQITYH), 168–170 (ALG), and 181–183 (GLS) contribute to the substrate site. Cys199 functions as the Acyl-thioester intermediate in the catalytic mechanism.

This sequence belongs to the LipB family.

It is found in the cytoplasm. The enzyme catalyses octanoyl-[ACP] + L-lysyl-[protein] = N(6)-octanoyl-L-lysyl-[protein] + holo-[ACP] + H(+). The protein operates within protein modification; protein lipoylation via endogenous pathway; protein N(6)-(lipoyl)lysine from octanoyl-[acyl-carrier-protein]: step 1/2. Functionally, catalyzes the transfer of endogenously produced octanoic acid from octanoyl-acyl-carrier-protein onto the lipoyl domains of lipoate-dependent enzymes. Lipoyl-ACP can also act as a substrate although octanoyl-ACP is likely to be the physiological substrate. In Burkholderia pseudomallei (strain 668), this protein is Octanoyltransferase.